The sequence spans 135 residues: UPF0225 protein CV_3559 (135 aa).

Belongs to the UPF0225 family.

The sequence is that of UPF0225 protein CV_3559 from Chromobacterium violaceum (strain ATCC 12472 / DSM 30191 / JCM 1249 / CCUG 213 / NBRC 12614 / NCIMB 9131 / NCTC 9757 / MK).